The chain runs to 102 residues: Large ribosomal subunit protein bL21 (102 aa).

This sequence belongs to the bacterial ribosomal protein bL21 family. As to quaternary structure, part of the 50S ribosomal subunit. Contacts protein L20.

Functionally, this protein binds to 23S rRNA in the presence of protein L20. The protein is Large ribosomal subunit protein bL21 of Lactiplantibacillus plantarum (strain ATCC BAA-793 / NCIMB 8826 / WCFS1) (Lactobacillus plantarum).